Consider the following 142-residue polypeptide: Protein archease (142 aa).

The Ca(2+) site is built by D12 and D141.

It belongs to the archease family.

Activates the tRNA-splicing ligase complex by facilitating the enzymatic turnover of catalytic subunit RtcB. Acts by promoting the guanylylation of RtcB, a key intermediate step in tRNA ligation. Can also alter the NTP specificity of RtcB such that ATP, dGTP or ITP is used efficiently. The protein is Protein archease of Thermococcus kodakarensis (strain ATCC BAA-918 / JCM 12380 / KOD1) (Pyrococcus kodakaraensis (strain KOD1)).